The following is a 1377-amino-acid chain: ATP-dependent helicase/nuclease subunit A (1377 aa).

The 475-residue stretch at 4–478 (TSWTPGQQKV…IDLSKNFRSR (475 aa)) folds into the UvrD-like helicase ATP-binding domain. 25 to 32 (AAAGSGKT) provides a ligand contact to ATP. One can recognise a UvrD-like helicase C-terminal domain in the interval 526-867 (FLFSDTKTEL…RIMSIHKSKG (342 aa)). Over residues 1036 to 1065 (FEEESDEQSDEERSDEERSDGEQSDGEQSD) the composition is skewed to acidic residues. The segment at 1036–1072 (FEEESDEQSDEERSDEERSDGEQSDGEQSDGEQPRKD) is disordered.

It belongs to the helicase family. AddA subfamily. Heterodimer of AddA and AddB/RexB. The cofactor is Mg(2+).

It catalyses the reaction Couples ATP hydrolysis with the unwinding of duplex DNA by translocating in the 3'-5' direction.. The catalysed reaction is ATP + H2O = ADP + phosphate + H(+). Functionally, the heterodimer acts as both an ATP-dependent DNA helicase and an ATP-dependent, dual-direction single-stranded exonuclease. Recognizes the chi site generating a DNA molecule suitable for the initiation of homologous recombination. The AddA nuclease domain is required for chi fragment generation; this subunit has the helicase and 3' -&gt; 5' nuclease activities. This chain is ATP-dependent helicase/nuclease subunit A, found in Lachnoclostridium phytofermentans (strain ATCC 700394 / DSM 18823 / ISDg) (Clostridium phytofermentans).